A 635-amino-acid polypeptide reads, in one-letter code: Interferon-induced GTP-binding protein Mx2 (635 aa).

Residues 31–304 (DLALPAIAVI…LVQHIEKSMP (274 aa)) form the Dynamin-type G domain. Positions 41-48 (GDQSSGKS) are G1 motif. 41–48 (GDQSSGKS) contributes to the GTP binding site. Positions 66–68 (VTR) are G2 motif. Residues 142 to 145 (DLPG) are G3 motif. GTP contacts are provided by residues 142–146 (DLPGI) and 211–214 (TKPD). Residues 211–214 (TKPD) form a G4 motif region. Residues 243–246 (KCRG) form a G5 motif region. One can recognise a GED domain in the interval 549-635 (LREMMLHLKS…MKAHNYLVEF (87 aa)).

This sequence belongs to the TRAFAC class dynamin-like GTPase superfamily. Dynamin/Fzo/YdjA family.

It is found in the nucleus. The protein resides in the cytoplasm. Functionally, does not inhibit strain RB-1 of the fish pathogen, infectious hematopoietic necrosis virus (IHNV). This is Interferon-induced GTP-binding protein Mx2 from Oncorhynchus mykiss (Rainbow trout).